The following is a 278-amino-acid chain: Small ribosomal subunit protein uS3 (278 aa).

The region spanning 38–106 is the KH type-2 domain; sequence IRKLLSKGME…QVQLNILEVK (69 aa). The segment at 213 to 278 is disordered; it reads RQAQAAARAG…APAPAENQEG (66 aa). Over residues 214-223 the composition is skewed to low complexity; it reads QAQAAARAGV. The segment covering 232–253 has biased composition (basic and acidic residues); the sequence is RGGERPSRGSRGDRPTRADRGG. Residues 259–278 are compositionally biased toward low complexity; that stretch reads EATGAATEQAAPAPAENQEG.

It belongs to the universal ribosomal protein uS3 family. As to quaternary structure, part of the 30S ribosomal subunit. Forms a tight complex with proteins S10 and S14.

Binds the lower part of the 30S subunit head. Binds mRNA in the 70S ribosome, positioning it for translation. The protein is Small ribosomal subunit protein uS3 of Nocardioides sp. (strain ATCC BAA-499 / JS614).